Consider the following 260-residue polypeptide: Phosphatidate cytidylyltransferase (260 aa).

The next 7 helical transmembrane spans lie at 9–29 (IIAL…LMLF), 46–66 (MIKF…IIML), 70–90 (AGEW…FIVL), 102–122 (FMDA…FMYF), 130–150 (LRYI…AYIF), 172–192 (FFGG…FVDL), and 196–216 (IWLL…GDLV).

This sequence belongs to the CDS family.

It localises to the cell membrane. The enzyme catalyses a 1,2-diacyl-sn-glycero-3-phosphate + CTP + H(+) = a CDP-1,2-diacyl-sn-glycerol + diphosphate. Its pathway is phospholipid metabolism; CDP-diacylglycerol biosynthesis; CDP-diacylglycerol from sn-glycerol 3-phosphate: step 3/3. The chain is Phosphatidate cytidylyltransferase (cdsA) from Staphylococcus epidermidis (strain ATCC 35984 / DSM 28319 / BCRC 17069 / CCUG 31568 / BM 3577 / RP62A).